The chain runs to 185 residues: Jasmonate-induced protein homolog (185 aa).

Belongs to the jasmonate-induced protein family.

The chain is Jasmonate-induced protein homolog from Atriplex canescens (Fourwing saltbush).